The following is a 196-amino-acid chain: UDP-N-acetylglucosamine transferase subunit ALG13 (196 aa).

It belongs to the glycosyltransferase 28 family. As to quaternary structure, heterodimer with ALG14 to form a functional enzyme.

It is found in the endoplasmic reticulum. The enzyme catalyses an N-acetyl-alpha-D-glucosaminyl-diphospho-di-trans,poly-cis-dolichol + UDP-N-acetyl-alpha-D-glucosamine = an N,N'-diacetylchitobiosyl-diphospho-di-trans,poly-cis-dolichol + UDP + H(+). Its function is as follows. Involved in protein N-glycosylation. Essential for the second step of the dolichol-linked oligosaccharide pathway. The protein is UDP-N-acetylglucosamine transferase subunit ALG13 (ALG13) of Yarrowia lipolytica (strain CLIB 122 / E 150) (Yeast).